A 104-amino-acid polypeptide reads, in one-letter code: UPF0145 protein GTNG_1265 (104 aa).

It belongs to the UPF0145 family.

This Geobacillus thermodenitrificans (strain NG80-2) protein is UPF0145 protein GTNG_1265.